A 714-amino-acid polypeptide reads, in one-letter code: MEGTAQNLDVEVPKQDLPNGTDSTGEPPLKKVRLEEPASDQQNGQAPPRLKGVAPIKAEFLIPKPKQGQAAVSSTDDAAEAAAYKDREDEKKGKKKKTTGQNKNRTFGRSQDSKGLCASRVYSPEFSPAECPFGDKCRFEHDLRTYLKEHKREDLNTFNGVCPVWSARGKCDAGWKCRFVGSHSIERVTEDGRKELVLVEDEERRKKAQPVFPSAAEDGTVNTTSPADKIALAKRQRPTPRADAYSDWLDLTSKELEKYFHGGQQNKDAHPDTAQDKEEKEENRATYTEAPFMPSEKRRLYFGPETPALAPLTTQGNLPFRRLCVELGAQLTYSEMALSMPLIQGHKPEWALMRAHETEALPPTVSARASVVQDYDNSKDMKFGAQIAGNKYRWVMKATEVLSSLTPNLRVIDLNCGCPIDLLYREGSGSALLDAPSKLEKMLRGMNAVSEQIPITVKIRTGTRDNTPNAQKLVERLILGGHEASMLNCGPSGVAAITLHGRSRQQRYTREANWEYISETAALIKRLNEKSDEVTDTIREPEERMRPNGGKTWFLGNGDCYSHVDYEDHIKNAKVDSVMVGRGALIKPWLFEEIQAGQYLDKSASERLAYVEKFARYGMETWGSDEYGIGITRRFLLEWLSFACRYVPIGLLEYLPPKINDRPPYWRGRNDMETLMGSHDYRDWIKISEMFLGPAHKDFKFEPKHKSNSYDTEG.

The disordered stretch occupies residues 1 to 111; it reads MEGTAQNLDV…NKNRTFGRSQ (111 aa). A compositionally biased stretch (basic and acidic residues) spans 83–92; the sequence is AYKDREDEKK. 2 consecutive C3H1-type zinc fingers follow at residues 111-144 and 161-186; these read QDSK…HDLR and VCPV…HSIE. 2 disordered regions span residues 202-238 and 261-285; these read EERR…RQRP and HGGQ…ENRA. A compositionally biased stretch (basic and acidic residues) spans 267–284; sequence KDAHPDTAQDKEEKEENR. FMN-binding positions include 311–313 and Gln-386; that span reads PLT. The active-site Proton donor is the Cys-418. Residues Lys-458, His-500, 557–559, and 581–582 contribute to the FMN site; these read NGD and GR.

It belongs to the Dus family. Dus3 subfamily. The cofactor is FMN.

Its subcellular location is the cytoplasm. The protein localises to the nucleus. It carries out the reaction 5,6-dihydrouridine(47) in tRNA + NAD(+) = uridine(47) in tRNA + NADH + H(+). It catalyses the reaction 5,6-dihydrouridine(47) in tRNA + NADP(+) = uridine(47) in tRNA + NADPH + H(+). The enzyme catalyses a 5,6-dihydrouridine in mRNA + NAD(+) = a uridine in mRNA + NADH + H(+). The catalysed reaction is a 5,6-dihydrouridine in mRNA + NADP(+) = a uridine in mRNA + NADPH + H(+). Functionally, catalyzes the synthesis of dihydrouridine, a modified base found in the D-loop of most tRNAs. Specifically modifies U47 in cytoplasmic tRNAs. Catalyzes the synthesis of dihydrouridine in some mRNAs, thereby affecting their translation. The chain is tRNA-dihydrouridine(47) synthase [NAD(P)(+)] (dus3) from Emericella nidulans (strain FGSC A4 / ATCC 38163 / CBS 112.46 / NRRL 194 / M139) (Aspergillus nidulans).